We begin with the raw amino-acid sequence, 140 residues long: Ribosome-binding factor A (140 aa).

A disordered region spans residues 116-140 (RERQERGEIPPGSDDAQNCHDDEPS).

It belongs to the RbfA family. In terms of assembly, monomer. Binds 30S ribosomal subunits, but not 50S ribosomal subunits or 70S ribosomes.

The protein resides in the cytoplasm. Functionally, one of several proteins that assist in the late maturation steps of the functional core of the 30S ribosomal subunit. Associates with free 30S ribosomal subunits (but not with 30S subunits that are part of 70S ribosomes or polysomes). Required for efficient processing of 16S rRNA. May interact with the 5'-terminal helix region of 16S rRNA. This is Ribosome-binding factor A from Synechococcus sp. (strain WH7803).